Here is a 332-residue protein sequence, read N- to C-terminus: Super small secreted glycoprotein (332 aa).

The signal sequence occupies residues 1–33 (MGSGYQLLQLPRERFRKTSFLVWVIILFQRAIS). A glycan (N-linked (GlcNAc...) asparagine; by host) is linked at Asn-41. Cystine bridges form between Cys-109-Cys-136 and Cys-122-Cys-148. Asn-205, Asn-229, Asn-239, Asn-258, and Asn-269 each carry an N-linked (GlcNAc...) asparagine; by host glycan.

It belongs to the filoviruses glycoprotein family.

The protein localises to the secreted. This chain is Super small secreted glycoprotein (GP), found in Reston ebolavirus (strain Reston-89) (REBOV).